Reading from the N-terminus, the 159-residue chain is Eukaryotic translation initiation factor 5A (159 aa).

Positions 1 to 12 (MSDEEHQFESKA) are enriched in basic and acidic residues. The segment at 1 to 23 (MSDEEHQFESKADAGASKTYPQQ) is disordered. Lys-52 carries the hypusine modification.

Belongs to the eIF-5A family. In terms of processing, lys-52 undergoes hypusination, a unique post-translational modification that consists in the addition of a butylamino group from spermidine to lysine side chain, leading to the formation of the unusual amino acid hypusine. eIF-5As are the only known proteins to undergo this modification, which is essential for their function.

Translation factor that promotes translation elongation and termination, particularly upon ribosome stalling at specific amino acid sequence contexts. Binds between the exit (E) and peptidyl (P) site of the ribosome and promotes rescue of stalled ribosome: specifically required for efficient translation of polyproline-containing peptides as well as other motifs that stall the ribosome. Acts as a ribosome quality control (RQC) cofactor by joining the RQC complex to facilitate peptidyl transfer during CAT tailing step. This is Eukaryotic translation initiation factor 5A (EIFSV1) from Senecio vernalis (Spring groundsel).